Consider the following 396-residue polypeptide: Elongation factor Tu (396 aa).

The 195-residue stretch at 11–205 (KPHVNIGTIG…VVDEYIPTPK (195 aa)) folds into the tr-type G domain. Positions 20–27 (GHVDHGKT) are G1. 20-27 (GHVDHGKT) is a GTP binding site. T27 provides a ligand contact to Mg(2+). The tract at residues 61 to 65 (GITIN) is G2. Positions 82–85 (DAPG) are G3. GTP-binding positions include 82–86 (DAPGH) and 137–140 (NKTD). Residues 137 to 140 (NKTD) form a G4 region. A G5 region spans residues 175–177 (SAL).

The protein belongs to the TRAFAC class translation factor GTPase superfamily. Classic translation factor GTPase family. EF-Tu/EF-1A subfamily. Monomer.

The protein localises to the cytoplasm. It catalyses the reaction GTP + H2O = GDP + phosphate + H(+). Its function is as follows. GTP hydrolase that promotes the GTP-dependent binding of aminoacyl-tRNA to the A-site of ribosomes during protein biosynthesis. This chain is Elongation factor Tu, found in Limosilactobacillus fermentum (strain NBRC 3956 / LMG 18251) (Lactobacillus fermentum).